We begin with the raw amino-acid sequence, 110 residues long: U1-lycotoxin-Ls1gg (110 aa).

The N-terminal stretch at Met1–Ala20 is a signal peptide. Residues Glu21 to Arg44 constitute a propeptide that is removed on maturation. 3 disulfide bridges follow: Cys54/Cys71, Cys61/Cys89, and Cys73/Cys87.

It belongs to the neurotoxin 19 (CSTX) family. 03 subfamily. Expressed by the venom gland.

The protein localises to the secreted. The chain is U1-lycotoxin-Ls1gg from Lycosa singoriensis (Wolf spider).